Reading from the N-terminus, the 220-residue chain is Tumor protein D54 (220 aa).

Methionine 1 carries the N-acetylmethionine modification. Polar residues predominate over residues 1-14 (MDSASQDINLNSPN). Residues 1–26 (MDSASQDINLNSPNKGVLSDFMTDVP) are disordered. 3 positions are modified to phosphoserine: serine 3, serine 12, and serine 19. A coiled-coil region spans residues 40-82 (GLTEVEEEELRAELAKVEEEIVTLRQVLAAKERHCGELKRRLG). Serine 96, serine 149, serine 168, and serine 175 each carry phosphoserine. Threonine 177 is modified (phosphothreonine). Serine 180 is subject to Phosphoserine. Threonine 187 is modified (phosphothreonine). Residues 189–220 (KSKVVGGRENGSDTLPSSPGSGDQTLPDHAPF) are disordered. Polar residues predominate over residues 200–212 (SDTLPSSPGSGDQ). Phosphoserine occurs at positions 206 and 209.

The protein belongs to the TPD52 family. Forms a homodimer or heterodimer with other members of the family. Interacts with MAL2.

In Rattus norvegicus (Rat), this protein is Tumor protein D54 (Tpd52l2).